Consider the following 477-residue polypeptide: Adenosylhomocysteinase (477 aa).

Substrate-binding residues include threonine 63, aspartate 142, and glutamate 202. 203–205 (TTT) serves as a coordination point for NAD(+). Residues lysine 232 and aspartate 236 each contribute to the substrate site. Residues asparagine 237, 266-271 (GYGDVG), glutamate 289, asparagine 324, 345-347 (IGH), and asparagine 390 each bind NAD(+).

The protein belongs to the adenosylhomocysteinase family. NAD(+) is required as a cofactor.

The protein localises to the cytoplasm. It carries out the reaction S-adenosyl-L-homocysteine + H2O = L-homocysteine + adenosine. Its pathway is amino-acid biosynthesis; L-homocysteine biosynthesis; L-homocysteine from S-adenosyl-L-homocysteine: step 1/1. Its function is as follows. May play a key role in the regulation of the intracellular concentration of adenosylhomocysteine. This chain is Adenosylhomocysteinase, found in Methylibium petroleiphilum (strain ATCC BAA-1232 / LMG 22953 / PM1).